Consider the following 391-residue polypeptide: Serpin B13 (391 aa).

This sequence belongs to the serpin family. Ov-serpin subfamily. As to expression, skin specific.

It is found in the cytoplasm. Functionally, may play a role in the proliferation or differentiation of keratinocytes. This is Serpin B13 (SERPINB13) from Homo sapiens (Human).